A 359-amino-acid polypeptide reads, in one-letter code: Protein FLX-like 2 (359 aa).

The span at 1-16 shows a compositional bias: basic residues; it reads MESKGRIHPSHHHMRR. A disordered region spans residues 1-27; the sequence is MESKGRIHPSHHHMRRPLPGPGGCIAH. The stretch at 83–236 forms a coiled coil; it reads HGSLRQELAA…EKLQAQLMNN (154 aa). A disordered region spans residues 303–359; that stretch reads TQPGYFPQRPGYNFPRGPPGSYDPTTRLPTGPYGAPFPPGPSNNTPYAGTHGNPSRR.

Belongs to the FLX family. Interacts with FRI.

In terms of biological role, has no transcriptional activation activity. The protein is Protein FLX-like 2 (FLXL2) of Arabidopsis thaliana (Mouse-ear cress).